A 252-amino-acid chain; its full sequence is Large ribosomal subunit protein uL29m (252 aa).

Residue Lys-146 is modified to N6-acetyllysine.

The protein belongs to the universal ribosomal protein uL29 family. Component of the mitochondrial ribosome large subunit (39S) which comprises a 16S rRNA and about 50 distinct proteins.

The protein localises to the mitochondrion. In Bos taurus (Bovine), this protein is Large ribosomal subunit protein uL29m (MRPL47).